The primary structure comprises 399 residues: Formate-dependent phosphoribosylglycinamide formyltransferase (399 aa).

Residues 8 to 9 and Glu68 contribute to the N(1)-(5-phospho-beta-D-ribosyl)glycinamide site; that span reads EL. ATP contacts are provided by residues Arg100, Lys141, 146–151, 185–188, and Glu193; these read SSGHGQ and EALA. The region spanning 105–308 is the ATP-grasp domain; it reads VLAHEELGLP…EFALHARAIL (204 aa). Mg(2+)-binding residues include Glu266 and Glu279. N(1)-(5-phospho-beta-D-ribosyl)glycinamide-binding positions include Asp286, Lys361, and 368–369; that span reads RR.

It belongs to the PurK/PurT family. Homodimer.

It catalyses the reaction N(1)-(5-phospho-beta-D-ribosyl)glycinamide + formate + ATP = N(2)-formyl-N(1)-(5-phospho-beta-D-ribosyl)glycinamide + ADP + phosphate + H(+). Its pathway is purine metabolism; IMP biosynthesis via de novo pathway; N(2)-formyl-N(1)-(5-phospho-D-ribosyl)glycinamide from N(1)-(5-phospho-D-ribosyl)glycinamide (formate route): step 1/1. Involved in the de novo purine biosynthesis. Catalyzes the transfer of formate to 5-phospho-ribosyl-glycinamide (GAR), producing 5-phospho-ribosyl-N-formylglycinamide (FGAR). Formate is provided by PurU via hydrolysis of 10-formyl-tetrahydrofolate. This is Formate-dependent phosphoribosylglycinamide formyltransferase from Bifidobacterium adolescentis (strain ATCC 15703 / DSM 20083 / NCTC 11814 / E194a).